The primary structure comprises 410 residues: D-amino acid dehydrogenase (410 aa).

Residue 9 to 14 (GGGIVG) participates in FAD binding.

This sequence belongs to the DadA oxidoreductase family. FAD is required as a cofactor.

The protein localises to the cell inner membrane. It carries out the reaction a D-alpha-amino acid + a quinone + H2O = a 2-oxocarboxylate + a quinol + NH4(+). Catalyzes the oxidative deamination of D-amino acids. Has broad substrate specificity; is mostly active on D-proline, and to a lesser extent, on several other D-amino acids such as D-alanine, D-phenylalanine and D-serine. Mediates electron transport from D-proline to coenzyme Q1 in vitro, and is involved in the electron transport chain from D-proline to the c-type cytochrome in vivo. This Helicobacter pylori (strain J99 / ATCC 700824) (Campylobacter pylori J99) protein is D-amino acid dehydrogenase.